Reading from the N-terminus, the 486-residue chain is Glutamyl-tRNA(Gln) amidotransferase subunit A (486 aa).

Active-site charge relay system residues include lysine 78 and serine 153. Serine 177 acts as the Acyl-ester intermediate in catalysis.

This sequence belongs to the amidase family. GatA subfamily. Heterotrimer of A, B and C subunits.

It catalyses the reaction L-glutamyl-tRNA(Gln) + L-glutamine + ATP + H2O = L-glutaminyl-tRNA(Gln) + L-glutamate + ADP + phosphate + H(+). Functionally, allows the formation of correctly charged Gln-tRNA(Gln) through the transamidation of misacylated Glu-tRNA(Gln) in organisms which lack glutaminyl-tRNA synthetase. The reaction takes place in the presence of glutamine and ATP through an activated gamma-phospho-Glu-tRNA(Gln). The protein is Glutamyl-tRNA(Gln) amidotransferase subunit A of Syntrophobacter fumaroxidans (strain DSM 10017 / MPOB).